A 713-amino-acid chain; its full sequence is Nucleoporin NUP82 (713 aa).

An interaction with NUP116 region spans residues Met1–Lys409. The segment at Thr463 to Gln713 is interaction with NSP1 and NUP159. A coiled-coil region spans residues Glu582–Gln713. Residues Lys607–Ile623 carry the Bipartite nuclear localization signal motif.

Component of the nuclear pore complex (NPC). NPC constitutes the exclusive means of nucleocytoplasmic transport. NPCs allow the passive diffusion of ions and small molecules and the active, nuclear transport receptor-mediated bidirectional transport of macromolecules such as proteins, RNAs, ribonucleoparticles (RNPs), and ribosomal subunits across the nuclear envelope. Due to its 8-fold rotational symmetry, all subunits are present with 8 copies or multiples thereof. NUP82 is part of the NUP82 subcomplex. This subcomplex is the base for interactions with NUP116 and GLE2, with NUP42 and GLE1 and with DYN2.

It localises to the nucleus. The protein resides in the nuclear pore complex. The protein localises to the nucleus membrane. Functions as a component of the nuclear pore complex (NPC). NPC components, collectively referred to as nucleoporins (NUPs), can play the role of both NPC structural components and of docking or interaction partners for transiently associated nuclear transport factors. It is specifically involved as part of the NUP82-NUP159-NSP1 subcomplex in nuclear mRNA and pre-ribosome export by acting as a linker tethering nucleoporins that are directly involved in nuclear transport to the NPC via its coiled-coil domain. This chain is Nucleoporin NUP82 (NUP82), found in Saccharomyces cerevisiae (strain ATCC 204508 / S288c) (Baker's yeast).